The chain runs to 180 residues: Peptide deformylase (180 aa).

Residues Cys-88 and His-130 each coordinate Fe cation. Glu-131 is a catalytic residue. Residue His-134 participates in Fe cation binding.

The protein belongs to the polypeptide deformylase family. It depends on Fe(2+) as a cofactor.

The enzyme catalyses N-terminal N-formyl-L-methionyl-[peptide] + H2O = N-terminal L-methionyl-[peptide] + formate. Functionally, removes the formyl group from the N-terminal Met of newly synthesized proteins. Requires at least a dipeptide for an efficient rate of reaction. N-terminal L-methionine is a prerequisite for activity but the enzyme has broad specificity at other positions. The protein is Peptide deformylase of Acidothermus cellulolyticus (strain ATCC 43068 / DSM 8971 / 11B).